A 365-amino-acid chain; its full sequence is tRNA N6-adenosine threonylcarbamoyltransferase (365 aa).

H111 and H115 together coordinate Fe cation. Substrate is bound by residues 140-144, D173, G186, and N298; that span reads IVSGG. D323 contributes to the Fe cation binding site.

It belongs to the KAE1 / TsaD family. Requires Fe(2+) as cofactor.

It localises to the cytoplasm. The enzyme catalyses L-threonylcarbamoyladenylate + adenosine(37) in tRNA = N(6)-L-threonylcarbamoyladenosine(37) in tRNA + AMP + H(+). Functionally, required for the formation of a threonylcarbamoyl group on adenosine at position 37 (t(6)A37) in tRNAs that read codons beginning with adenine. Is involved in the transfer of the threonylcarbamoyl moiety of threonylcarbamoyl-AMP (TC-AMP) to the N6 group of A37, together with TsaE and TsaB. TsaD likely plays a direct catalytic role in this reaction. The polypeptide is tRNA N6-adenosine threonylcarbamoyltransferase (Thermomicrobium roseum (strain ATCC 27502 / DSM 5159 / P-2)).